The following is a 142-amino-acid chain: Alpha-lactalbumin (142 aa).

The N-terminal stretch at 1–19 (MMSFVSLLLVGILFHATQA) is a signal peptide. One can recognise a C-type lysozyme domain in the interval 20–142 (EQLTKCEVFR…KLDQWLCEKL (123 aa)). Disulfide bonds link C25-C139, C47-C130, C80-C96, and C92-C110. N64 and N93 each carry an N-linked (GlcNAc...) asparagine glycan. The Ca(2+) site is built by K98, D101, D103, D106, and D107.

Belongs to the glycosyl hydrolase 22 family. As to quaternary structure, lactose synthase (LS) is a heterodimer of a catalytic component, beta1,4-galactosyltransferase (beta4Gal-T1) and a regulatory component, alpha-lactalbumin (LA). In terms of tissue distribution, mammary gland specific. Secreted in milk.

It is found in the secreted. Its function is as follows. Regulatory subunit of lactose synthase, changes the substrate specificity of galactosyltransferase in the mammary gland making glucose a good acceptor substrate for this enzyme. This enables LS to synthesize lactose, the major carbohydrate component of milk. In other tissues, galactosyltransferase transfers galactose onto the N-acetylglucosamine of the oligosaccharide chains in glycoproteins. The sequence is that of Alpha-lactalbumin (LALBA) from Bos mutus grunniens (Wild yak).